Reading from the N-terminus, the 239-residue chain is Phospholipase A2 (239 aa).

The N-terminal stretch at 1–19 is a signal peptide; it reads MSLIIVLVISVLSADAVLS. The propeptide occupies 20–105; that stretch reads MDNELYLNLE…GRCLSVGESE (86 aa). Ca(2+) is bound by residues tryptophan 113, glycine 115, and glycine 117. 5 disulfide bridges follow: cysteine 114–cysteine 136, cysteine 135–cysteine 174, cysteine 142–cysteine 167, cysteine 165–cysteine 202, and cysteine 207–cysteine 217. Histidine 139 is a catalytic residue. A Ca(2+)-binding site is contributed by aspartate 140. Positions 211–213 are excised as a propeptide; that stretch reads RSP.

This sequence belongs to the phospholipase A2 family. Group III subfamily. In terms of assembly, heterodimer composed of a small subunit and a large subunit; disulfid-linked. The cofactor is Ca(2+). As to expression, expressed by the venom gland.

It localises to the secreted. The catalysed reaction is a 1,2-diacyl-sn-glycero-3-phosphocholine + H2O = a 1-acyl-sn-glycero-3-phosphocholine + a fatty acid + H(+). Its function is as follows. Toxic phospholipase A2, which may catalyze the calcium-dependent hydrolysis of the 2-acyl groups in 3-sn-phosphoglycerides. Inhibits both skeletal (RYR1) and cardiac (RYR2) ryanodine receptors (calcium release channels). Probably blocks ryanodine receptors by generating a lipid product. This chain is Phospholipase A2, found in Hoffmannihadrurus gertschi (Scorpion).